The primary structure comprises 461 residues: UDP-glycosyltransferase 82A1 (461 aa).

UDP-alpha-D-glucose contacts are provided by residues Ser292, 349–351, 366–374, and 388–391; these read APQ, HCGWNSTME, and AGDQ.

This sequence belongs to the UDP-glycosyltransferase family.

The sequence is that of UDP-glycosyltransferase 82A1 (UGT82A1) from Arabidopsis thaliana (Mouse-ear cress).